The chain runs to 449 residues: Sensor histidine protein kinase/phosphatase WalK (449 aa).

Residues 1–13 lie on the Extracellular side of the membrane; sequence MLDLLKQTIFTRD. Residues 14–34 form a helical membrane-spanning segment; the sequence is FIFILILLGFILVVTLLLLEN. Residues 35 to 87 enclose the HAMP domain; sequence RRDNIQLKQINQKVKDLIAGDYSKVLDMQGGSEITNITNNLNDLSEVIRLTQE. The Cytoplasmic portion of the chain corresponds to 35 to 449; sequence RRDNIQLKQI…EEVWEDEVED (415 aa). One can recognise a PAS domain in the interval 92–158; sequence ESKRLNSILF…YELRDLITQS (67 aa). Positions 157–211 constitute a PAC domain; sequence QSPELLLDSQDINGEYLNLRVRFALIRRESGFISGLVAVLHDTTEQEKEERERRL. Residues 215-435 form the Histidine kinase domain; sequence NVSHELRTPL…TFTIVLPYDK (221 aa). H218 is modified (phosphohistidine).

As to quaternary structure, may form homodimers. May interact with serine/threonine-protein kinase StkP; the interaction may play a role in regulating Walk signal transduction. Autophosphorylated.

It is found in the membrane. It catalyses the reaction ATP + protein L-histidine = ADP + protein N-phospho-L-histidine.. Member of the two-component regulatory system WalK/WalR that regulates genes involved in cell wall metabolism. Functions as a sensor protein kinase which is autophosphorylated at a histidine residue and transfers its phosphate group to WalR. In turn, WalR binds to the upstream promoter regions of target genes to positively and negatively regulate their expression. Required to maintain expression of WalRK regulon genes in exponentially growing cells, including peptidoglycan hydrolase pcsB. Phosphorylates WalR and also capable of dephosphorylation of WalR. WalK phosphatase activity is probably involved in preventing cross-talk from PnpS and other non-cognate sensor kinases during exponential growth. May be considered a potential virulence factor. This chain is Sensor histidine protein kinase/phosphatase WalK, found in Streptococcus pneumoniae serotype 2 (strain D39 / NCTC 7466).